The chain runs to 517 residues: MFARDSGRGHRHGRDRQAAVVPAPAGRARFTGDAPAVAVVGGGIAGIAAATLLAERGVRVTLYEREPGLGGRLSGWPTELTDGTTVTMSRGFHAFFRQYYNLRGLLRRVDPDLGSLTRLPDYPLWHGSGLRDSFARVPRTPPLSAMGFVALSPTFGLRDLVRINPRAAVGLLDVRVPEVYERLDGISATDFLDRIRFPEAAHHLAFEVFSRSFFADPRELSAAELALMFHIYFLGSSEGLLFDVPGEPFPAALWEPLHHYLEVHRVDVRTRTPLRQVRPRPGGGLDLTTDDRTTRYDALVLALDSGALRRLVAASPELGDTDWRARIARLRTAPPFLVSRLWLDRPVAHDRPGFLGTSGYGPLDNVSVLDRWEGEAARWARRTRGSVVELHAYAVAPDADRSAVQDEALRQLHRVYPETRSARLLDARHEWRADCPMFPVGGYRDRPGVRSPDPAVTVAGDMVRTELPVALMERAATSGFLAANALLERWGVRGQTLWTVPRAGRSAVLRRLAALAD.

The tract at residues Met-1–Pro-24 is disordered. Residues Ala-45, Glu-64–Arg-65, Arg-72, Tyr-99, Asp-461, and Met-472 contribute to the FAD site.

The protein belongs to the carotenoid/retinoid oxidoreductase family. FAD is required as a cofactor.

The catalysed reaction is a carotenoid beta-end derivative + 2 A = a carotenoid phi-end derivative + 2 AH2. The protein operates within carotenoid biosynthesis. Functionally, involved in the biosynthesis of isorenieratene, a carotenoid with aromatic end groups. Catalyzes the introduction of two additional double bonds into each ionone ring of beta-carotene to produce isorenieratene. The reaction includes an intramolecular methyl transfer from position C1 to position C2 of the ring. The protein is Carotenoid phi-ring synthase of Streptomyces griseus.